The following is a 381-amino-acid chain: 40-kDa huntingtin-associated protein (381 aa).

Ala-2 is subject to N-acetylalanine. Positions 34–36 (KKR) match the Nuclear localization signal motif. The interval 213–260 (EHGGHPVQQPELPQQLPSVPQPSLPGPQPRPVLGSTLPLPLPPDHAPG) is disordered. Residues 218–230 (PVQQPELPQQLPS) show a composition bias toward low complexity. Residues 231-242 (VPQPSLPGPQPR) show a composition bias toward pro residues.

In terms of assembly, interacts with HTT (via C-terminus). Interacts with RAB5A. Found in a complex with F8A1/F8A2/F8A3, HTT and RAB5A; mediates the recruitment of HTT by RAB5A onto early endosomes.

The protein resides in the cytoplasm. It localises to the nucleus. It is found in the early endosome. Its subcellular location is the nuclear body. In terms of biological role, RAB5A effector molecule that is involved in vesicular trafficking of early endosomes. Mediates the recruitment of HTT by RAB5A onto early endosomes. The HTT-F8A1/F8A2/F8A3-RAB5A complex stimulates early endosomal interaction with actin filaments and inhibits interaction with microtubules, leading to the reduction of endosome motility. This chain is 40-kDa huntingtin-associated protein (F8a1), found in Rattus norvegicus (Rat).